The sequence spans 350 residues: MALPRRPPTLTRVYLDGPFGIGKTSILNAMPDHTPDGAPILKVYEPMKYWRCQSTDLVVAANETPERRRGGALSRFQSDMIMASIQARFADPYLLFHERLSSKCRGKIEICDTPAIILMLDRHPVAAILCFPITRYLLGEYSLEMLISSIIRLPLESPGCNLTVTILPDEKEHVNRICSRDRPGETADRNMLRTLNAVYASLVDTVKYANLTCPYEKESWEMEWLGLPWFEESLLEEFISRPRPVICSRTRMPLDRTLLAIFKRKELCSENGELLTQYSWILWGLLTKLHTINVELFDISGMSRRECASAIMHTMPERLSTLASWNDLCELEDDVISYNKGMCNEVGASR.

ATP is bound at residue 17-24 (GPFGIGKT). The Proton acceptor role is filled by E45. Position 86 (Q86) interacts with substrate. R176 lines the ATP pocket. A substrate-binding site is contributed by R182.

It belongs to the herpesviridae thymidine kinase family. In terms of assembly, homodimer.

It catalyses the reaction thymidine + ATP = dTMP + ADP + H(+). Catalyzes the transfer of the gamma-phospho group of ATP to thymidine to generate dTMP in the salvage pathway of pyrimidine synthesis. The dTMP serves as a substrate for DNA polymerase during viral DNA replication. Allows the virus to be reactivated and to grow in non-proliferative cells lacking a high concentration of phosphorylated nucleic acid precursors. The sequence is that of Thymidine kinase from Gallus gallus (Chicken).